Consider the following 96-residue polypeptide: Large ribosomal subunit protein bL28 (96 aa).

Belongs to the bacterial ribosomal protein bL28 family.

In Orientia tsutsugamushi (strain Boryong) (Rickettsia tsutsugamushi), this protein is Large ribosomal subunit protein bL28.